A 143-amino-acid polypeptide reads, in one-letter code: Cofilin (143 aa).

In terms of domain architecture, ADF-H spans 5–137; it reads GVAVADESLT…AYESVLEKVS (133 aa).

This sequence belongs to the actin-binding proteins ADF family.

The protein localises to the cytoplasm. It is found in the cytoskeleton. The protein resides in the nucleus matrix. In terms of biological role, controls reversibly actin polymerization and depolymerization in a pH-sensitive manner. It has the ability to bind G- and F-actin in a 1:1 ratio of cofilin to actin. Binding to F-actin is regulated by tropomyosin. It is the major component of intranuclear and cytoplasmic actin rods. Required for accumulation of actin at the cell division site via depolymerizing actin at the cell ends. In association with myosin II has a role in the assembly of the contractile ring via severing actin filaments. Involved in the maintenance of the contractile ring once formed. In association with profilin and capping protein, has a role in the mitotic reorganization of the actin cytoskeleton. In Eremothecium gossypii (strain ATCC 10895 / CBS 109.51 / FGSC 9923 / NRRL Y-1056) (Yeast), this protein is Cofilin (COF1).